A 31-amino-acid polypeptide reads, in one-letter code: Photosystem II reaction center protein T (31 aa).

A helical transmembrane segment spans residues serine 3–phenylalanine 23.

Belongs to the PsbT family. In terms of assembly, PSII is composed of 1 copy each of membrane proteins PsbA, PsbB, PsbC, PsbD, PsbE, PsbF, PsbH, PsbI, PsbJ, PsbK, PsbL, PsbM, PsbT, PsbX, PsbY, PsbZ, Psb30/Ycf12, peripheral proteins PsbO, CyanoQ (PsbQ), PsbU, PsbV and a large number of cofactors. It forms dimeric complexes.

The protein resides in the cellular thylakoid membrane. Functionally, found at the monomer-monomer interface of the photosystem II (PS II) dimer, plays a role in assembly and dimerization of PSII. PSII is a light-driven water plastoquinone oxidoreductase, using light energy to abstract electrons from H(2)O, generating a proton gradient subsequently used for ATP formation. The polypeptide is Photosystem II reaction center protein T (Picosynechococcus sp. (strain ATCC 27264 / PCC 7002 / PR-6) (Agmenellum quadruplicatum)).